Consider the following 584-residue polypeptide: uncharacterized protein (584 aa).

This is an uncharacterized protein from Magallana gigas (Pacific oyster).